Here is a 472-residue protein sequence, read N- to C-terminus: 3-isopropylmalate dehydratase large subunit (472 aa).

Positions 353, 414, and 417 each coordinate [4Fe-4S] cluster.

The protein belongs to the aconitase/IPM isomerase family. LeuC type 1 subfamily. Heterodimer of LeuC and LeuD. Requires [4Fe-4S] cluster as cofactor.

It carries out the reaction (2R,3S)-3-isopropylmalate = (2S)-2-isopropylmalate. It participates in amino-acid biosynthesis; L-leucine biosynthesis; L-leucine from 3-methyl-2-oxobutanoate: step 2/4. Functionally, catalyzes the isomerization between 2-isopropylmalate and 3-isopropylmalate, via the formation of 2-isopropylmaleate. The polypeptide is 3-isopropylmalate dehydratase large subunit (Acinetobacter baumannii (strain ACICU)).